Here is a 538-residue protein sequence, read N- to C-terminus: Atos homolog protein B (538 aa).

Polar residues-rich tracts occupy residues 1 to 12 and 129 to 141; these read MRHVQAETSPSS and GGSSTSPWTSGAR. 3 disordered regions span residues 1–98, 129–185, and 201–303; these read MRHV…EPPT, GGSS…QLHT, and LVSG…PTDC. The segment covering 227 to 238 has biased composition (pro residues); the sequence is HTPPGPGPPGPC. Residues Ser254 and Ser255 each carry the phosphoserine modification. Residues 348-430 are required for macropage invasion; sequence LLGNFEESLL…VPKVGTIQVT (83 aa). The tract at residues 436 to 444 is transactivation domain 1 (TAD1); it reads QTVVKMFLV.

Belongs to the ATOS family.

The protein resides in the nucleus. In terms of biological role, transcription regulator that may syncronize transcriptional and translational programs. This chain is Atos homolog protein B, found in Bos taurus (Bovine).